Reading from the N-terminus, the 188-residue chain is Accessory gene regulator protein B (188 aa).

4 helical membrane passes run 49-69 (VALL…YFFV), 82-102 (LLCH…IVHF), 104-124 (VSWT…ICYA), and 163-183 (YMQL…PIFF).

Belongs to the AgrB family.

The protein localises to the cell membrane. In terms of biological role, essential for the production of a quorum sensing system signal molecule, the autoinducing peptide (AIP). This quorum sensing system is responsible for the regulation of the expression of virulence factor genes. Involved in the proteolytic processing of AgrD, the precursor of AIP. The polypeptide is Accessory gene regulator protein B (Staphylococcus lugdunensis).